Reading from the N-terminus, the 210-residue chain is Ribosomal RNA small subunit methyltransferase G (210 aa).

S-adenosyl-L-methionine is bound by residues Gly76, Leu81, 127 to 128 (VE), and Arg142.

This sequence belongs to the methyltransferase superfamily. RNA methyltransferase RsmG family.

It localises to the cytoplasm. The catalysed reaction is guanosine(527) in 16S rRNA + S-adenosyl-L-methionine = N(7)-methylguanosine(527) in 16S rRNA + S-adenosyl-L-homocysteine. In terms of biological role, specifically methylates the N7 position of guanine in position 527 of 16S rRNA. This Vibrio cholerae serotype O1 (strain ATCC 39315 / El Tor Inaba N16961) protein is Ribosomal RNA small subunit methyltransferase G.